The primary structure comprises 257 residues: Type III pantothenate kinase (257 aa).

Position 6–13 (6–13) interacts with ATP; sequence DCGNTNTV. Residue 107–110 participates in substrate binding; the sequence is GPDR. The Proton acceptor role is filled by Asp109. Asp129 is a K(+) binding site. Thr132 provides a ligand contact to ATP. Thr184 is a substrate binding site.

This sequence belongs to the type III pantothenate kinase family. Homodimer. NH4(+) serves as cofactor. K(+) is required as a cofactor.

It is found in the cytoplasm. The catalysed reaction is (R)-pantothenate + ATP = (R)-4'-phosphopantothenate + ADP + H(+). Its pathway is cofactor biosynthesis; coenzyme A biosynthesis; CoA from (R)-pantothenate: step 1/5. Functionally, catalyzes the phosphorylation of pantothenate (Pan), the first step in CoA biosynthesis. The chain is Type III pantothenate kinase from Cereibacter sphaeroides (strain ATCC 17025 / ATH 2.4.3) (Rhodobacter sphaeroides).